The chain runs to 274 residues: 2,3,4,5-tetrahydropyridine-2,6-dicarboxylate N-succinyltransferase (274 aa).

It belongs to the transferase hexapeptide repeat family.

It localises to the cytoplasm. The enzyme catalyses (S)-2,3,4,5-tetrahydrodipicolinate + succinyl-CoA + H2O = (S)-2-succinylamino-6-oxoheptanedioate + CoA. It functions in the pathway amino-acid biosynthesis; L-lysine biosynthesis via DAP pathway; LL-2,6-diaminopimelate from (S)-tetrahydrodipicolinate (succinylase route): step 1/3. This is 2,3,4,5-tetrahydropyridine-2,6-dicarboxylate N-succinyltransferase from Yersinia pseudotuberculosis serotype IB (strain PB1/+).